Here is a 193-residue protein sequence, read N- to C-terminus: Major structural subunit of bundle-forming pilus (193 aa).

Residues 1-13 constitute a propeptide, leader sequence; the sequence is MVSKIMNKKYEKG. Leucine 14 carries the N-methylleucine modification. The helical transmembrane segment at 14-35 threads the bilayer; the sequence is LSLIESAMVLALAATVTAGVMF. A disulfide bond links cysteine 129 and cysteine 179.

This sequence belongs to the N-Me-Phe pilin family. In terms of assembly, 10 to 100 laterally aligned filaments or bundle-forming pili coalesce into rope-like bundles. These form linkages between the bacteria within the enteropathogenic E.coli (EPEC) microcolonies that are attached to epithelial cells.

It is found in the fimbrium. The protein localises to the membrane. In terms of biological role, major component of type IV bundle-forming pili (BFP) that plays a role in adherence to host cells and virulence. The chain is Major structural subunit of bundle-forming pilus (bfpA) from Escherichia coli O127:H6 (strain E2348/69 / EPEC).